A 275-amino-acid polypeptide reads, in one-letter code: Spermidine/putrescine transport system permease protein PotB (275 aa).

The helical transmembrane segment at 1-21 (MIVTIVGWLVLFVFLPNLMII) threads the bilayer. Residues 22 to 60 (GTSFLTRDDASFVKMVFTLDNYTRLLDPLYFEVLLHSLN) lie on the Periplasmic side of the membrane. Residues 55–261 (LLHSLNMALI…IVMGLMLLVY (207 aa)) form the ABC transmembrane type-1 domain. Residues 61 to 81 (MALIATLACLVLGYPFAWFLA) traverse the membrane as a helical segment. Over 82–89 (KLPHKVRP) the chain is Cytoplasmic. The chain crosses the membrane as a helical span at residues 90-110 (LLLFLLIVPFWTNSLIRIYGL). The Periplasmic segment spans residues 111–135 (KIFLSTKGYLNEFLLWLGVIDTPIR). A helical transmembrane segment spans residues 136–156 (IMFTPSAVIIGLVYILLPFMV). The Cytoplasmic segment spans residues 157–187 (MPLYSSIEKLDKPLLEAARDLGASKLQTFIR). A helical transmembrane segment spans residues 188-208 (IIIPLTMPGIIAGCLLVMLPA). At 209-241 (MGLFYVSDLMGGAKNLLIGNVIKVQFLNIRDWP) the chain is on the periplasmic side. A helical transmembrane segment spans residues 242–262 (FGAATSITLTIVMGLMLLVYW). Residues 263 to 275 (RASRLLNKKVELE) lie on the Cytoplasmic side of the membrane.

Belongs to the binding-protein-dependent transport system permease family. CysTW subfamily.

It is found in the cell inner membrane. Its function is as follows. Required for the activity of the bacterial periplasmic transport system of putrescine and spermidine. This Escherichia coli (strain K12) protein is Spermidine/putrescine transport system permease protein PotB (potB).